Here is a 215-residue protein sequence, read N- to C-terminus: Cytochrome b6 (215 aa).

Residues 32–52 (IFYCLGGIVFVSFLIQVATGF) form a helical membrane-spanning segment. Cysteine 35 contributes to the heme c binding site. Histidine 86 and histidine 100 together coordinate heme b. Helical transmembrane passes span 90 to 110 (ASMM…TGGF), 116 to 136 (LTWV…VTGY), and 186 to 206 (LHTF…FLMI). Residues histidine 187 and histidine 202 each contribute to the heme b site.

Belongs to the cytochrome b family. PetB subfamily. In terms of assembly, the 4 large subunits of the cytochrome b6-f complex are cytochrome b6, subunit IV (17 kDa polypeptide, PetD), cytochrome f and the Rieske protein, while the 4 small subunits are PetG, PetL, PetM and PetN. The complex functions as a dimer. Heme b serves as cofactor. Requires heme c as cofactor.

The protein resides in the plastid. It localises to the chloroplast thylakoid membrane. Component of the cytochrome b6-f complex, which mediates electron transfer between photosystem II (PSII) and photosystem I (PSI), cyclic electron flow around PSI, and state transitions. In Porphyra purpurea (Red seaweed), this protein is Cytochrome b6.